We begin with the raw amino-acid sequence, 69 residues long: Sec-independent protein translocase protein TatA (69 aa).

Residues 1–21 (MFGLGGQELILILMIILLLFG) traverse the membrane as a helical segment. The interval 49–69 (EFNKAMDDETPKKKDFGPDRE) is disordered.

Belongs to the TatA/E family. As to quaternary structure, forms a complex with TatC.

It localises to the cell inner membrane. In terms of biological role, part of the twin-arginine translocation (Tat) system that transports large folded proteins containing a characteristic twin-arginine motif in their signal peptide across membranes. TatA could form the protein-conducting channel of the Tat system. In Chlorobium luteolum (strain DSM 273 / BCRC 81028 / 2530) (Pelodictyon luteolum), this protein is Sec-independent protein translocase protein TatA.